Reading from the N-terminus, the 208-residue chain is ATP-dependent Clp protease proteolytic subunit 2 (208 aa).

Catalysis depends on S102, which acts as the Nucleophile. The active site involves H127.

This sequence belongs to the peptidase S14 family. In terms of assembly, fourteen ClpP subunits assemble into 2 heptameric rings which stack back to back to give a disk-like structure with a central cavity, resembling the structure of eukaryotic proteasomes.

The protein resides in the cytoplasm. The enzyme catalyses Hydrolysis of proteins to small peptides in the presence of ATP and magnesium. alpha-casein is the usual test substrate. In the absence of ATP, only oligopeptides shorter than five residues are hydrolyzed (such as succinyl-Leu-Tyr-|-NHMec, and Leu-Tyr-Leu-|-Tyr-Trp, in which cleavage of the -Tyr-|-Leu- and -Tyr-|-Trp bonds also occurs).. Functionally, cleaves peptides in various proteins in a process that requires ATP hydrolysis. Has a chymotrypsin-like activity. Plays a major role in the degradation of misfolded proteins. This chain is ATP-dependent Clp protease proteolytic subunit 2, found in Chelativorans sp. (strain BNC1).